Consider the following 250-residue polypeptide: Glycerol-1-phosphate phosphohydrolase 2 (250 aa).

Catalysis depends on Asp-18, which acts as the Nucleophile. Mg(2+) is bound by residues Asp-18 and Asp-20. Residue Asp-20 is the Proton donor of the active site. A Glycyl lysine isopeptide (Lys-Gly) (interchain with G-Cter in ubiquitin) cross-link involves residue Lys-64. The residue at position 90 (Ser-90) is a Phosphoserine. Residue Lys-144 forms a Glycyl lysine isopeptide (Lys-Gly) (interchain with G-Cter in ubiquitin) linkage. Asp-179 contributes to the Mg(2+) binding site.

This sequence belongs to the HAD-like hydrolase superfamily. DOG/GPP family. Monomer. Mg(2+) serves as cofactor.

Its subcellular location is the cytoplasm. It is found in the nucleus. It carries out the reaction sn-glycerol 1-phosphate + H2O = glycerol + phosphate. It catalyses the reaction sn-glycerol 3-phosphate + H2O = glycerol + phosphate. Its function is as follows. Glycerol-1-phosphate phosphohydrolase involved in glycerol biosynthesis. Plays a role in osmoadaptation. The protein is Glycerol-1-phosphate phosphohydrolase 2 of Saccharomyces cerevisiae (strain ATCC 204508 / S288c) (Baker's yeast).